The following is a 370-amino-acid chain: Dihydrolipoyllysine-residue acetyltransferase component of acetoin cleaving system (370 aa).

The 76-residue stretch at 4–79 (IHTLTMPKWG…PVGALLAVVV (76 aa)) folds into the Lipoyl-binding domain. An N6-lipoyllysine modification is found at K45. One can recognise an AB hydrolase-1 domain in the interval 135-355 (PLVLVHGFGG…EAGHMVQMEA (221 aa)).

Requires (R)-lipoate as cofactor.

It catalyses the reaction N(6)-[(R)-dihydrolipoyl]-L-lysyl-[protein] + acetyl-CoA = N(6)-[(R)-S(8)-acetyldihydrolipoyl]-L-lysyl-[protein] + CoA. Its pathway is ketone degradation; acetoin degradation. This is Dihydrolipoyllysine-residue acetyltransferase component of acetoin cleaving system (acoC) from Pseudomonas putida (Arthrobacter siderocapsulatus).